Reading from the N-terminus, the 259-residue chain is MKILLTNDDGVTSQGLLILAKVLSQKHNILVVAPESEQSATGHAITVRMPIWVKRVRVLEEFPIYATTGTPADCVKIGMEVLANKQIDMVISGINIGHNLGTDVIYSGTVSGALEGALLGVPSIAVSAPARENFDYYSASFFISNFIENFDFSILEPFTALNINFPEGDIKGWKATRQSIRRYADRFEARTDPSGNTYYWMYGDVVEDDSATDCDYCVVSKGYVSVTPITVFMLNERALLQLKEVENGKENKTSWRSGS.

A divalent metal cation-binding residues include aspartate 8, aspartate 9, serine 39, and asparagine 95.

The protein belongs to the SurE nucleotidase family. A divalent metal cation serves as cofactor.

The protein resides in the cytoplasm. It carries out the reaction a ribonucleoside 5'-phosphate + H2O = a ribonucleoside + phosphate. Its function is as follows. Nucleotidase that shows phosphatase activity on nucleoside 5'-monophosphates. In Pseudothermotoga lettingae (strain ATCC BAA-301 / DSM 14385 / NBRC 107922 / TMO) (Thermotoga lettingae), this protein is 5'-nucleotidase SurE.